Here is a 267-residue protein sequence, read N- to C-terminus: Dihydropteroate synthase (267 aa).

The 251-residue stretch at M1 to K251 folds into the Pterin-binding domain. N11 contributes to the Mg(2+) binding site. Residues T51, D84, N103, D167, K203, and R239–H241 each bind (7,8-dihydropterin-6-yl)methyl diphosphate.

The protein belongs to the DHPS family. In terms of assembly, homodimer. The cofactor is Mg(2+).

It carries out the reaction (7,8-dihydropterin-6-yl)methyl diphosphate + 4-aminobenzoate = 7,8-dihydropteroate + diphosphate. It functions in the pathway cofactor biosynthesis; tetrahydrofolate biosynthesis; 7,8-dihydrofolate from 2-amino-4-hydroxy-6-hydroxymethyl-7,8-dihydropteridine diphosphate and 4-aminobenzoate: step 1/2. In terms of biological role, catalyzes the condensation of para-aminobenzoate (pABA) with 6-hydroxymethyl-7,8-dihydropterin diphosphate (DHPt-PP) to form 7,8-dihydropteroate (H2Pte), the immediate precursor of folate derivatives. This Staphylococcus aureus (strain MW2) protein is Dihydropteroate synthase (folP).